A 357-amino-acid polypeptide reads, in one-letter code: 4-hydroxy-2-oxovalerate aldolase (357 aa).

The disordered stretch occupies residues 1-21 (MSQEAARDAAAGRPVQIHDPT). In terms of domain architecture, Pyruvate carboxyltransferase spans 15 to 265 (VQIHDPTLRD…RTGIDLYRLL (251 aa)). Substrate is bound at residue 23-24 (RD). Position 24 (D24) interacts with Mn(2+). H27 functions as the Proton acceptor in the catalytic mechanism. Residues S177 and H204 each coordinate substrate. Mn(2+) contacts are provided by H204 and H206.

Belongs to the 4-hydroxy-2-oxovalerate aldolase family.

It catalyses the reaction (S)-4-hydroxy-2-oxopentanoate = acetaldehyde + pyruvate. In terms of biological role, involved in the biosynthesis of the peptidyl nucleoside antibiotic nikkomycin. The polypeptide is 4-hydroxy-2-oxovalerate aldolase (Streptomyces tendae).